Reading from the N-terminus, the 266-residue chain is Regulatory protein RecX (266 aa).

This sequence belongs to the RecX family.

Its subcellular location is the cytoplasm. Modulates RecA activity. This Levilactobacillus brevis (strain ATCC 367 / BCRC 12310 / CIP 105137 / JCM 1170 / LMG 11437 / NCIMB 947 / NCTC 947) (Lactobacillus brevis) protein is Regulatory protein RecX.